Reading from the N-terminus, the 94-residue chain is Large ribosomal subunit protein bL27 (94 aa).

Positions 1–9 (MLRLDLQFF) are excised as a propeptide.

This sequence belongs to the bacterial ribosomal protein bL27 family. In terms of processing, the N-terminus is cleaved by ribosomal processing cysteine protease Prp.

In Bacillus velezensis (strain DSM 23117 / BGSC 10A6 / LMG 26770 / FZB42) (Bacillus amyloliquefaciens subsp. plantarum), this protein is Large ribosomal subunit protein bL27.